The primary structure comprises 196 residues: Acyl-homoserine-lactone synthase (196 aa).

The protein belongs to the autoinducer synthase family.

It carries out the reaction a fatty acyl-[ACP] + S-adenosyl-L-methionine = an N-acyl-L-homoserine lactone + S-methyl-5'-thioadenosine + holo-[ACP] + H(+). In terms of biological role, required for the synthesis of a yet unknown N-aceyl-homoserine lactone (N-aceyl-HSL), an autoinducer molecule which binds to PhzR and thus regulates phenazine production. The chain is Acyl-homoserine-lactone synthase (phzI) from Pseudomonas fluorescens.